The sequence spans 355 residues: S-adenosylmethionine:tRNA ribosyltransferase-isomerase (355 aa).

It belongs to the QueA family. As to quaternary structure, monomer.

Its subcellular location is the cytoplasm. The enzyme catalyses 7-aminomethyl-7-carbaguanosine(34) in tRNA + S-adenosyl-L-methionine = epoxyqueuosine(34) in tRNA + adenine + L-methionine + 2 H(+). The protein operates within tRNA modification; tRNA-queuosine biosynthesis. In terms of biological role, transfers and isomerizes the ribose moiety from AdoMet to the 7-aminomethyl group of 7-deazaguanine (preQ1-tRNA) to give epoxyqueuosine (oQ-tRNA). This chain is S-adenosylmethionine:tRNA ribosyltransferase-isomerase, found in Aeromonas salmonicida (strain A449).